Here is a 1923-residue protein sequence, read N- to C-terminus: GREB1-like protein (1923 aa).

The span at 87–96 (EDDEDDEEMS) shows a compositional bias: acidic residues. Disordered stretches follow at residues 87-111 (EDDE…KPAP), 246-326 (SCHS…GPPK), and 1101-1222 (RAAV…RGCR). A compositionally biased stretch (low complexity) spans 252-262 (PSSSVSSTVTP). Composition is skewed to polar residues over residues 263–278 (ENGT…TQTD), 296–307 (TPAHTGNYSLSP), and 1119–1161 (PQSN…SPAT). Residues 1195–1206 (SSTTSKPSSSSS) are compositionally biased toward low complexity. Residues 1843–1862 (GVFFSGLLLYLCDSFVGADL) form a helical membrane-spanning segment.

Belongs to the GREB1 family. In terms of tissue distribution, widely expressed, with prominent expression in the cochlea. Expressed at high levels in fetal kidney. In adult tissues, highest levels in vagina, cervix and epididymis.

Its subcellular location is the membrane. Functionally, plays a major role in early metanephros and genital development. The chain is GREB1-like protein (GREB1L) from Homo sapiens (Human).